The chain runs to 296 residues: Meiotically up-regulated gene 2 protein (296 aa).

Belongs to the UPF0612 family.

Its subcellular location is the cytoplasm. The protein resides in the nucleus. Functionally, has a role in meiosis. The sequence is that of Meiotically up-regulated gene 2 protein (mug2) from Schizosaccharomyces pombe (strain 972 / ATCC 24843) (Fission yeast).